The chain runs to 244 residues: Tyrosine recombinase XerD-like (244 aa).

The Core-binding (CB) domain occupies 1 to 73 (MRDRISAFLE…ACNQFLYFLY (73 aa)). Residues 90-244 (AEKKTEKPEI…KTVLTLEKYR (155 aa)) enclose the Tyr recombinase domain. Active-site residues include Lys-150 and Arg-211. Catalysis depends on Tyr-243, which acts as the O-(3'-phospho-DNA)-tyrosine intermediate.

The protein belongs to the 'phage' integrase family. XerD-like subfamily.

The protein resides in the cytoplasm. Functionally, putative tyrosine recombinase. Not involved in the cutting and rejoining of the recombining DNA molecules on dif(SL) site. The sequence is that of Tyrosine recombinase XerD-like from Streptococcus pneumoniae serotype 2 (strain D39 / NCTC 7466).